A 587-amino-acid polypeptide reads, in one-letter code: Chaperonin CPN60, mitochondrial (587 aa).

The transit peptide at 1–32 directs the protein to the mitochondrion; the sequence is MYRLISSIASKARVARNCTSQIGSRLSSTRNY.

It belongs to the chaperonin (HSP60) family.

It localises to the mitochondrion. Implicated in mitochondrial protein import and macromolecular assembly. May facilitate the correct folding of imported proteins. May also prevent misfolding and promote the refolding and proper assembly of unfolded polypeptides generated under stress conditions in the mitochondrial matrix. The sequence is that of Chaperonin CPN60, mitochondrial from Brassica napus (Rape).